Reading from the N-terminus, the 226-residue chain is Phosphoribosylformylglycinamidine synthase subunit PurQ (226 aa).

Positions 4 to 226 constitute a Glutamine amidotransferase type-1 domain; the sequence is RIGVVTFPGS…TSILKKLVNA (223 aa). Cysteine 87 functions as the Nucleophile in the catalytic mechanism. Active-site residues include histidine 196 and glutamate 198.

As to quaternary structure, part of the FGAM synthase complex composed of 1 PurL, 1 PurQ and 2 PurS subunits.

It localises to the cytoplasm. It catalyses the reaction N(2)-formyl-N(1)-(5-phospho-beta-D-ribosyl)glycinamide + L-glutamine + ATP + H2O = 2-formamido-N(1)-(5-O-phospho-beta-D-ribosyl)acetamidine + L-glutamate + ADP + phosphate + H(+). The enzyme catalyses L-glutamine + H2O = L-glutamate + NH4(+). Its pathway is purine metabolism; IMP biosynthesis via de novo pathway; 5-amino-1-(5-phospho-D-ribosyl)imidazole from N(2)-formyl-N(1)-(5-phospho-D-ribosyl)glycinamide: step 1/2. Functionally, part of the phosphoribosylformylglycinamidine synthase complex involved in the purines biosynthetic pathway. Catalyzes the ATP-dependent conversion of formylglycinamide ribonucleotide (FGAR) and glutamine to yield formylglycinamidine ribonucleotide (FGAM) and glutamate. The FGAM synthase complex is composed of three subunits. PurQ produces an ammonia molecule by converting glutamine to glutamate. PurL transfers the ammonia molecule to FGAR to form FGAM in an ATP-dependent manner. PurS interacts with PurQ and PurL and is thought to assist in the transfer of the ammonia molecule from PurQ to PurL. This chain is Phosphoribosylformylglycinamidine synthase subunit PurQ, found in Streptomyces coelicolor (strain ATCC BAA-471 / A3(2) / M145).